Here is a 336-residue protein sequence, read N- to C-terminus: Type II methyltransferase M.PvuII (336 aa).

Repeat copies occupy residues 11-113 (SNDM…IYNF) and 181-293 (SDRM…WISF). The disordered stretch occupies residues 196–215 (TPKTRPSGHDIGKSFSKDNG). Residues 202–211 (SGHDIGKSFS) show a composition bias toward basic and acidic residues.

It belongs to the N(4)/N(6)-methyltransferase family. N(4) subfamily. Monomer.

It carries out the reaction a 2'-deoxycytidine in DNA + S-adenosyl-L-methionine = an N(4)-methyl-2'-deoxycytidine in DNA + S-adenosyl-L-homocysteine + H(+). A beta subtype methylase, recognizes the double-stranded sequence 5'-CAGCTG-3', methylates C-4 on both strands, and protects the DNA from cleavage by the PvuII endonuclease. This chain is Type II methyltransferase M.PvuII, found in Proteus hauseri.